The following is a 469-amino-acid chain: Mitochondrial adenyl nucleotide antiporter SLC25A25 (469 aa).

The tract at residues 1-165 (MLCLCLYVPV…LYWKHSTIFD (165 aa)) is regulatory N-terminal domain. Topologically, residues 1–189 (MLCLCLYVPV…ERQTGMWWRH (189 aa)) are mitochondrial intermembrane. 3 consecutive EF-hand domains span residues 47-80 (TYRQWKQKIVQAGDKDLDGQLDFEEFVHYLQDHE), 78-113 (DHEKKLRLVFKSLDKKNDGRIDAQEIMQSLRDLGVK), and 114-149 (ISEQQAEKILKSMDKNGTMTIDWNEWRDYHLLHPVE). The Ca(2+) site is built by Asp-60, Asp-62, Asp-64, Gln-66, and Glu-71. A linker region region spans residues 151–160 (IPEIILYWKH). The tract at residues 166-469 (VGENLTVPDE…LKITLGVQSR (304 aa)) is C-terminal transmembrane transporter domain. Solcar repeat units lie at residues 184–270 (GMWW…IKRL), 278–363 (LRIH…LKNA), and 375–463 (PGVF…LKIT). Residues 190 to 207 (LVAGGGAGAVSRTCTAPL) form a helical membrane-spanning segment. Over 208–244 (DRLKVLMQVHASRSNNMGIVGGFTQMIREGGARSLWR) the chain is Mitochondrial matrix. Residues 245-264 (GNGINVLKIAPESAIKFMAY) form a helical membrane-spanning segment. Residues 265–287 (EQIKRLVGSDQETLRIHERLVAG) are Mitochondrial intermembrane-facing. A helical transmembrane segment spans residues 288 to 301 (SLAGAIAQSSIYPM). The Mitochondrial matrix segment spans residues 302-337 (EVLKTRMALRKTGQYSGMLDCARRILAREGVAAFYK). A helical transmembrane segment spans residues 338–357 (GYVPNMLGIIPYAGIDLAVY). The Mitochondrial intermembrane segment spans residues 358–380 (ETLKNAWLQHYAVNSADPGVFVL). Residues 381–398 (LACGTMSSTCGQLASYPL) form a helical membrane-spanning segment. The Mitochondrial matrix segment spans residues 399-437 (ALVRTRMQAQASIEGAPEVTMSSLFKHILRTEGAFGLYR). A helical transmembrane segment spans residues 438 to 457 (GLAPNFMKVIPAVSISYVVY). Residues 458 to 469 (ENLKITLGVQSR) lie on the Mitochondrial intermembrane side of the membrane.

Belongs to the mitochondrial carrier (TC 2.A.29) family. As to expression, widely expressed. Expressed in fetal and adult liver, skeletal muscle, testis, ovary, hippocampus and caudate nucleus. Expressed in all tissues tested. In terms of tissue distribution, expression is restricted to kidney and lung.

It localises to the mitochondrion inner membrane. It carries out the reaction Mg(2+)(out) + phosphate(in) + ATP(out) = Mg(2+)(in) + phosphate(out) + ATP(in). Its activity is regulated as follows. Activated by an increase in cytosolic calcium levels that induce a conformational change of the N-terminal regulatory domain, uncapping the channel and allowing transport. Functionally, electroneutral antiporter that most probably mediates the transport of adenyl nucleotides through the inner mitochondrial membrane. Originally identified as an ATP-magnesium/inorganic phosphate antiporter, it could have a broader specificity for adenyl nucleotides. By regulating the mitochondrial matrix adenyl nucleotide pool could adapt to changing cellular energetic demands and indirectly regulate adenyl nucleotide-dependent metabolic pathways. This is Mitochondrial adenyl nucleotide antiporter SLC25A25 from Homo sapiens (Human).